Consider the following 313-residue polypeptide: E3 ubiquitin-protein ligase siah2 (313 aa).

The disordered stretch occupies residues methionine 1–alanine 49. The segment covering glutamine 20–proline 29 has biased composition (pro residues). The RING-type zinc-finger motif lies at cysteine 69–arginine 104. The SBD stretch occupies residues valine 119–cysteine 311. An SIAH-type zinc finger spans residues alanine 122 to lysine 182. Cysteine 127, cysteine 134, histidine 146, cysteine 150, cysteine 157, cysteine 164, histidine 176, and histidine 181 together coordinate Zn(2+).

Belongs to the SINA (Seven in absentia) family. Homodimer. In terms of tissue distribution, widely expressed in early embryos until stage 40. It is then expressed in brain, spinal cord and in the developing and mature eye.

The protein resides in the cytoplasm. The enzyme catalyses S-ubiquitinyl-[E2 ubiquitin-conjugating enzyme]-L-cysteine + [acceptor protein]-L-lysine = [E2 ubiquitin-conjugating enzyme]-L-cysteine + N(6)-ubiquitinyl-[acceptor protein]-L-lysine.. Its pathway is protein modification; protein ubiquitination. E3 ubiquitin-protein ligase that mediates ubiquitination and subsequent proteasomal degradation of target proteins. E3 ubiquitin ligases accept ubiquitin from an E2 ubiquitin-conjugating enzyme in the form of a thioester and then directly transfers the ubiquitin to targeted substrates. Involved in eye morphogenesis, probably triggers the ubiquitin-mediated degradation of different substrates. May play a role in the regulation of the cellular clock function. This chain is E3 ubiquitin-protein ligase siah2 (siah2), found in Xenopus laevis (African clawed frog).